The following is a 342-amino-acid chain: Methylthioribose-1-phosphate isomerase (342 aa).

Substrate-binding positions include 49–51 (RGA), Arg-86, and Gln-187. Asp-228 acts as the Proton donor in catalysis. A substrate-binding site is contributed by 238–239 (NK).

The protein belongs to the eIF-2B alpha/beta/delta subunits family. MtnA subfamily.

The catalysed reaction is 5-(methylsulfanyl)-alpha-D-ribose 1-phosphate = 5-(methylsulfanyl)-D-ribulose 1-phosphate. Its pathway is amino-acid biosynthesis; L-methionine biosynthesis via salvage pathway; L-methionine from S-methyl-5-thio-alpha-D-ribose 1-phosphate: step 1/6. In terms of biological role, catalyzes the interconversion of methylthioribose-1-phosphate (MTR-1-P) into methylthioribulose-1-phosphate (MTRu-1-P). This Enterobacter sp. (strain 638) protein is Methylthioribose-1-phosphate isomerase.